Consider the following 101-residue polypeptide: Urease subunit beta (101 aa).

It belongs to the urease beta subunit family. Heterotrimer of UreA (gamma), UreB (beta) and UreC (alpha) subunits. Three heterotrimers associate to form the active enzyme.

Its subcellular location is the cytoplasm. It carries out the reaction urea + 2 H2O + H(+) = hydrogencarbonate + 2 NH4(+). It participates in nitrogen metabolism; urea degradation; CO(2) and NH(3) from urea (urease route): step 1/1. The protein is Urease subunit beta of Dinoroseobacter shibae (strain DSM 16493 / NCIMB 14021 / DFL 12).